The following is a 218-amino-acid chain: Ras-related protein R-Ras (218 aa).

The disordered stretch occupies residues 1–30 (MSSGAASGTGRGRPRGGGPGPRDPPPGETH). Over residues 7 to 20 (SGTGRGRPRGGGPG) the composition is skewed to gly residues. A GTP-binding site is contributed by 36–44 (GGGGVGKSA). Residues 58 to 66 (YDPTIEDSY) carry the Effector region motif. GTP is bound by residues 83–87 (DTAGQ), 142–145 (NKAD), and 172–174 (SAK). At Cys215 the chain carries Cysteine methyl ester. Residue Cys215 is the site of S-geranylgeranyl cysteine attachment. The propeptide at 216–218 (VLL) is removed in mature form.

This sequence belongs to the small GTPase superfamily. Ras family. Interacts with PLCE1. Interacts (active GTP-bound form preferentially) with RGS14. Interacts with OSBPL3. Interacts with ZDHHC19. S-palmitoylated by ZDHHC19, leading to increased association with membranes and with rafts/caveolae as well as enhanced cell viability.

The protein localises to the cell membrane. The catalysed reaction is GTP + H2O = GDP + phosphate + H(+). Its function is as follows. GTP-binding protein with GTPase activity, likely involved in the regulation of MAPK signaling pathway and thereby controlling multiple cellular processes. Regulates the organization of the actin cytoskeleton. With OSPBL3, modulates integrin beta-1 (ITGB1) activity. This Mus musculus (Mouse) protein is Ras-related protein R-Ras (Rras).